A 479-amino-acid polypeptide reads, in one-letter code: Putative F-box protein At1g67390 (479 aa).

In terms of domain architecture, F-box spans 40 to 88 (DDRISKLPDDVLVMILASLSTEDALKTSVLSTRWKNVWKQVPYLHFDLL).

The protein is Putative F-box protein At1g67390 of Arabidopsis thaliana (Mouse-ear cress).